A 269-amino-acid polypeptide reads, in one-letter code: Small ribosomal subunit protein uS2 (269 aa).

The segment at 224 to 269 is disordered; it reads ANQGREDSEDVYSETENDTEETDEELVSEEDLKEFVENSEEESDEE. Over residues 230–269 the composition is skewed to acidic residues; sequence DSEDVYSETENDTEETDEELVSEEDLKEFVENSEEESDEE.

The protein belongs to the universal ribosomal protein uS2 family.

This is Small ribosomal subunit protein uS2 from Finegoldia magna (strain ATCC 29328 / DSM 20472 / WAL 2508) (Peptostreptococcus magnus).